The chain runs to 362 residues: Heat-inducible transcription repressor HrcA (362 aa).

This sequence belongs to the HrcA family.

Negative regulator of class I heat shock genes (grpE-dnaK-dnaJ and groELS operons). Prevents heat-shock induction of these operons. In Bradyrhizobium diazoefficiens (strain JCM 10833 / BCRC 13528 / IAM 13628 / NBRC 14792 / USDA 110), this protein is Heat-inducible transcription repressor HrcA.